Consider the following 908-residue polypeptide: MFSSIARKIFGSKNAREIKRMGKVVKRINELEESISALDEAALKAKTQEFRSRLEKGETLEQLLPEAFAVAREAGKRVMGMRHFDVQLIGGMVLHEGKIAEMRTGEGKTLVATLPVYLNALSGKGVHVVTVNDYLARRDADWMRPLYEYLGLSVGVVVSGQDGETKRAAYASDITYGTNNEFGFDYLRDNMAFSLTDKAQRGQHFAIVDEVDSILIDEARTPLIISGPAEDSSELYRKINELVPQLKKGEPPEEGQPVDGHFTVDEKSRSVELSESGHTYVEELLTKNGLLEEGDSLYAATNLGLLHHISSALRAHHLYSKDVDYIVQNGQVVIVDEHTGRTMPGRRWGEGLHQAIEAKERIKIQAESQTLASTTFQNYFRLYEKLAGMTGTADTEAFEFRQIYGLDVIVIPTNKPIKRIDYNDLVYLSVDEKFQAVIDDIKDTVTQNRPVLVGTASIEASEYLSAMLKKEGIAHNVLNAKQHEREAHVIAQAGRPGAVTIATNMAGRGTDIVLGGNWEADVAELEDPTPEQIAKIKADWQKRHDQVIAAGGLHVVGSERHESRRIDNQLRGRSGRQGDPGSTRFYLSLEDNLMRIFASDRVKNIMQALGMQKGEAIEHRMVSNAIEKAQRKVEGRNFDIRKSLLEYDDVANDQRHVVYEQRNEIMATDDISEMIDAIRGDVVSATVSQFIPPQSIAEQWNVPGLEKQLESDFGVDLPVQQWLDEDKRLHEETLREKILQAVVDSYREKEEVVGASVMRNFEKQVFLQVLDTLWKEHLSNMDLLRMGIHLRGYAQKNPKQEYKREAFELFQNMLDTIKHDVVRVICHVRVQKQEEMEELERRRREALAQQMQRAQATHPEATEEDSDAEEQAEGSDAPYVRDHKKVGRNEPCPCGSGKKYKQCHGRLE.

ATP is bound by residues glutamine 87, 105–109, and aspartate 511; that span reads GEGKT. Positions 559 to 570 are enriched in basic and acidic residues; it reads ERHESRRIDNQL. Disordered stretches follow at residues 559-582 and 841-908; these read ERHE…DPGS and RRRR…GRLE. Over residues 847 to 856 the composition is skewed to low complexity; that stretch reads LAQQMQRAQA. Residues 862-873 are compositionally biased toward acidic residues; the sequence is TEEDSDAEEQAE. Positions 892, 894, 903, and 904 each coordinate Zn(2+). Residues 898 to 908 show a composition bias toward basic residues; it reads KKYKQCHGRLE.

This sequence belongs to the SecA family. As to quaternary structure, monomer and homodimer. Part of the essential Sec protein translocation apparatus which comprises SecA, SecYEG and auxiliary proteins SecDF-YajC and YidC. It depends on Zn(2+) as a cofactor.

Its subcellular location is the cell inner membrane. It is found in the cytoplasm. It carries out the reaction ATP + H2O + cellular proteinSide 1 = ADP + phosphate + cellular proteinSide 2.. In terms of biological role, part of the Sec protein translocase complex. Interacts with the SecYEG preprotein conducting channel. Has a central role in coupling the hydrolysis of ATP to the transfer of proteins into and across the cell membrane, serving both as a receptor for the preprotein-SecB complex and as an ATP-driven molecular motor driving the stepwise translocation of polypeptide chains across the membrane. This chain is Protein translocase subunit SecA, found in Hahella chejuensis (strain KCTC 2396).